The chain runs to 146 residues: Hemoglobin subunit beta-1 (146 aa).

The 145-residue stretch at 2–146 (EWSSNERSTI…VISALSRQYF (145 aa)) folds into the Globin domain. The heme b site is built by H63 and H92.

It belongs to the globin family. As to quaternary structure, heterotetramer of two alpha chains and two beta chains. As to expression, red blood cells.

Involved in oxygen transport from gills to the various peripheral tissues. This chain is Hemoglobin subunit beta-1 (hbb1), found in Muraena helena (Mediterranean moray).